The primary structure comprises 214 residues: Uridine kinase (214 aa).

An ATP-binding site is contributed by Gly11–Thr18.

Belongs to the uridine kinase family.

It is found in the cytoplasm. It catalyses the reaction uridine + ATP = UMP + ADP + H(+). The enzyme catalyses cytidine + ATP = CMP + ADP + H(+). The protein operates within pyrimidine metabolism; CTP biosynthesis via salvage pathway; CTP from cytidine: step 1/3. Its pathway is pyrimidine metabolism; UMP biosynthesis via salvage pathway; UMP from uridine: step 1/1. This chain is Uridine kinase, found in Brevibacillus brevis (strain 47 / JCM 6285 / NBRC 100599).